The chain runs to 212 residues: Large ribosomal subunit protein mL48 (212 aa).

The N-terminal 28 residues, 1 to 28 (MSGTLEKVLCLRNNTIFKQAFSLLRFRT), are a transit peptide targeting the mitochondrion. Lysine 199 bears the N6-succinyllysine mark.

The protein belongs to the mitochondrion-specific ribosomal protein mL48 family. As to quaternary structure, component of the mitochondrial large ribosomal subunit (mt-LSU). Mature mammalian 55S mitochondrial ribosomes consist of a small (28S) and a large (39S) subunit. The 28S small subunit contains a 12S ribosomal RNA (12S mt-rRNA) and 30 different proteins. The 39S large subunit contains a 16S rRNA (16S mt-rRNA), a copy of mitochondrial valine transfer RNA (mt-tRNA(Val)), which plays an integral structural role, and 52 different proteins. mL48 is located at the central protuberance. Interacts with OXA1L.

The protein resides in the mitochondrion. This is Large ribosomal subunit protein mL48 (MRPL48) from Homo sapiens (Human).